The primary structure comprises 828 residues: Periplasmic nitrate reductase (828 aa).

Positions 1–31 form a signal peptide, tat-type signal; it reads MKLSRRSFMKANAVAAAAAAAGLSVPGVARA. Positions 39-95 constitute a 4Fe-4S Mo/W bis-MGD-type domain; that stretch reads IKWDKAPCRFCGTGCGVLVGTQQGRVVACQGDPDAPVNRGLNCIKGYFLPKIMYGKD. C46, C49, C53, and C81 together coordinate [4Fe-4S] cluster. Residues K83, Q150, N175, C179, 212–219, 243–247, 262–264, M372, Q376, N482, 508–509, K531, D558, and 718–727 each bind Mo-bis(molybdopterin guanine dinucleotide); these read WGANMAEM, STYQH, QSD, SD, and TGRVLEHWHT. Residue F794 coordinates substrate. N802 and K819 together coordinate Mo-bis(molybdopterin guanine dinucleotide).

Belongs to the prokaryotic molybdopterin-containing oxidoreductase family. NasA/NapA/NarB subfamily. As to quaternary structure, component of the periplasmic nitrate reductase NapAB complex composed of NapA and NapB. [4Fe-4S] cluster serves as cofactor. The cofactor is Mo-bis(molybdopterin guanine dinucleotide). Post-translationally, predicted to be exported by the Tat system. The position of the signal peptide cleavage has not been experimentally proven.

It localises to the periplasm. It carries out the reaction 2 Fe(II)-[cytochrome] + nitrate + 2 H(+) = 2 Fe(III)-[cytochrome] + nitrite + H2O. Its function is as follows. Catalytic subunit of the periplasmic nitrate reductase complex NapAB. Receives electrons from NapB and catalyzes the reduction of nitrate to nitrite. This Escherichia coli O6:K15:H31 (strain 536 / UPEC) protein is Periplasmic nitrate reductase.